A 546-amino-acid polypeptide reads, in one-letter code: Chaperonin GroEL (546 aa).

Residues 30 to 33 (TLGP), K51, 87 to 91 (DGTTT), G415, and D497 contribute to the ATP site. The tract at residues 527 to 546 (PKKDSPAPAMPGGGMGGMDF) is disordered. The segment covering 537-546 (PGGGMGGMDF) has biased composition (gly residues).

Belongs to the chaperonin (HSP60) family. Forms a cylinder of 14 subunits composed of two heptameric rings stacked back-to-back. Interacts with the co-chaperonin GroES.

Its subcellular location is the cytoplasm. The enzyme catalyses ATP + H2O + a folded polypeptide = ADP + phosphate + an unfolded polypeptide.. Its function is as follows. Together with its co-chaperonin GroES, plays an essential role in assisting protein folding. The GroEL-GroES system forms a nano-cage that allows encapsulation of the non-native substrate proteins and provides a physical environment optimized to promote and accelerate protein folding. The protein is Chaperonin GroEL of Methylobacterium radiotolerans (strain ATCC 27329 / DSM 1819 / JCM 2831 / NBRC 15690 / NCIMB 10815 / 0-1).